Reading from the N-terminus, the 76-residue chain is Serine proteinase inhibitor IA-2 (76 aa).

Residue serine 1 is modified to N-acetylserine.

Belongs to the protease inhibitor I9 family.

Functionally, specifically inhibits an intracellular serine proteinase (proteinase A). The sequence is that of Serine proteinase inhibitor IA-2 from Pleurotus ostreatus (Oyster mushroom).